Reading from the N-terminus, the 551-residue chain is E3 ubiquitin-protein ligase TRIM8 (551 aa).

The RING-type zinc-finger motif lies at 15–56 (CPICLHVFVEPVQLPCKHNFCRGCIGEAWAKDSGLVRCPECN). B box-type zinc fingers lie at residues 92-132 (CVFC…ARGH) and 140-182 (VRAW…VCDV). 2 coiled-coil regions span residues 181–249 (DVEI…DLRQ) and 274–295 (ERMQ…KTED). The interval 399 to 457 (QYGAAGTASSEGQSGQPLGPCSSTQHLVALPGGTQPVHSSPVFPPSQYPNGSTTQQPML) is disordered. Composition is skewed to polar residues over residues 405-424 (TASS…STQH) and 446-456 (YPNGSTTQQPM).

This sequence belongs to the TRIM/RBCC family. As to quaternary structure, homodimer. Interacts with SOCS1 (via) SH2 domain and SOCS box. Interacts with HSP90AB1; prevents nucleus translocation of phosphorylated STAT3 and HSP90AB1. Interacts with MAP3K7/TAK1. Interacts with PIAS3. Interacts with TICAM1. Interacts with TRIM15; this interaction prevents TRIM8 cytoplasmic translocation. As to expression, high expression in heart, liver, and thymus. Expressed in embryonic CNS, kidney, lens and gut.

The catalysed reaction is S-ubiquitinyl-[E2 ubiquitin-conjugating enzyme]-L-cysteine + [acceptor protein]-L-lysine = [E2 ubiquitin-conjugating enzyme]-L-cysteine + N(6)-ubiquitinyl-[acceptor protein]-L-lysine.. The protein operates within protein modification; protein ubiquitination. E3 ubiquitin-protein ligase that participates in multiple biological processes including cell survival, differentiation, apoptosis, and in particular, the innate immune response. Participates in the activation of interferon-gamma signaling by promoting proteasomal degradation of the repressor SOCS1. Plays a positive role in the TNFalpha and IL-1beta signaling pathways. Mechanistically, induces the 'Lys-63'-linked polyubiquitination of MAP3K7/TAK1 component leading to the activation of NF-kappa-B. Also modulates STAT3 activity through negative regulation of PIAS3, either by degradation of PIAS3 through the ubiquitin-proteasome pathway or exclusion of PIAS3 from the nucleus. Negatively regulates TLR3/4-mediated innate immune response by catalyzing 'Lys-6'- and 'Lys-33'-linked polyubiquitination of TICAM1 and thereby disrupting the TICAM1-TBK1 interaction. The protein is E3 ubiquitin-protein ligase TRIM8 (Trim8) of Mus musculus (Mouse).